Consider the following 934-residue polypeptide: MSNSDIRSFFGGGNAQKKPKVSPTPTSPKPKRSLKKKRIVLSDDEDGTIENSKVPASKSKVQKRNESEDISHSLPSIVHEDDKLVGSDGVSTTPDEYFEQQSTRSRSKPRIISNKETTTSKDVVHPVKTENFANDLDTTSDSKPVVHQTRATRKPAQPKAEKSTTSKSKSHTTTATTHTSRSSKSKGLPRFSDEVSQALKNVPLIDVDSMGVMAPGTFYERAATTQTPGSKPVPEGNSDCLSGISFVITGILETLTRQEATDLIKQYGGKVTGAPSVRTDFILLGENAGPRKVETIKQHKIPAINEDGLFYLITHLPASGGTGAAAQAAQQKKEQEEKKILETVARMDDSNKKESQPSQIWTSKYAPTSLKDICGNKGVVQKLQKWLQDYHKNRKSNFNKPGPDGLGLYKAVLLSGPPGIGKTTAAHLVAKLEGYDVLELNASDTRSKRLLDEQLFGVTDSQSLAGYFGTKANPVDMAKSRLVLIMDEIDGMSSGDRGGVGQLNMIIKKSMIPIICICNDRAHPKLRPLDRTTFDLRFRRPDANSMRSRIMSIAYREGLKLSPQAVDQLVQGTQSDMRQIINLLSTYKLSCSEMTPQNSQAVIKNSEKHIVMKPWDICSRYLHGGMFHPSSKSTINDKLELYFNDHEFSYLMVQENYLNTTPDRIRQEPPKMSHLKHLELISSAANSFSDSDLVDSMIHGPQQHWSLMPTHALMSCVRPASFVAGSGSRQIRFTNWLGNNSKTNKLYRMLREIQVHMRLKVSANKLDLRQHYIPILYESLPVKLSTGHSDVVPEIIELMDEYYLNREDFDSITELVLPADAGEKLMKTIPTAAKSAFTRKYNSSSHPIAFFGSSDVLPMKGSAQREVPDVEDAIEAEDEMLEEASDSEAANEEDIDLSKDKFISVPKKPKKRTKAKAEASSSSSTSRRSRKKTA.

Positions M1 to R190 are disordered. The residue at position 27 (S27) is a Phosphoserine. The segment covering K29–I39 has biased composition (basic residues). Residues G89–R104 show a composition bias toward polar residues. Residues T118 to K128 show a composition bias toward basic and acidic residues. Over residues T165–K186 the composition is skewed to low complexity. Positions G236–A326 constitute a BRCT domain. ATP is bound by residues T362, C374, G416 to T423, and N519. A compositionally biased stretch (acidic residues) spans A876 to I895. Residues A876 to A934 form a disordered region.

It belongs to the activator 1 large subunit family. Heteropentamer of subunits rfc1, rfc2, rfc3, rfc4 and rfc5 that forms a complex (RFC) with PCNA in the presence of ATP. Interacts with cdc24.

Its subcellular location is the nucleus. The protein resides in the nucleolus. In terms of biological role, the elongation of primed DNA templates by DNA polymerase delta and epsilon requires the action of the accessory proteins PCNA and activator 1. Subunit 1 is essential for cell cycle progression. It may associate with components of the DNA replication machinery and serve to enhance the efficiency of DNA replication. The protein is Replication factor C subunit 1 (rfc1) of Schizosaccharomyces pombe (strain 972 / ATCC 24843) (Fission yeast).